Here is a 259-residue protein sequence, read N- to C-terminus: 4-hydroxy-tetrahydrodipicolinate reductase (259 aa).

G9 to M14 contacts NAD(+). R37 contributes to the NADP(+) binding site. NAD(+) is bound by residues G92–T94 and A116–M119. The Proton donor/acceptor role is filled by H149. H150 lines the (S)-2,3,4,5-tetrahydrodipicolinate pocket. The Proton donor role is filled by K153. G159–T160 contributes to the (S)-2,3,4,5-tetrahydrodipicolinate binding site.

It belongs to the DapB family.

The protein resides in the cytoplasm. It carries out the reaction (S)-2,3,4,5-tetrahydrodipicolinate + NAD(+) + H2O = (2S,4S)-4-hydroxy-2,3,4,5-tetrahydrodipicolinate + NADH + H(+). The enzyme catalyses (S)-2,3,4,5-tetrahydrodipicolinate + NADP(+) + H2O = (2S,4S)-4-hydroxy-2,3,4,5-tetrahydrodipicolinate + NADPH + H(+). Its pathway is amino-acid biosynthesis; L-lysine biosynthesis via DAP pathway; (S)-tetrahydrodipicolinate from L-aspartate: step 4/4. Its function is as follows. Catalyzes the conversion of 4-hydroxy-tetrahydrodipicolinate (HTPA) to tetrahydrodipicolinate. In Desulfovibrio desulfuricans (strain ATCC 27774 / DSM 6949 / MB), this protein is 4-hydroxy-tetrahydrodipicolinate reductase.